Consider the following 280-residue polypeptide: Probable endonuclease lcl3 (280 aa).

The chain crosses the membrane as a helical span at residues 50–67 (TLIPTLILTTAILSAARF). The region spanning 89–257 (RSIYGKVTSV…KLKGNGMWKG (169 aa)) is the TNase-like domain. Residue Arg140 is part of the active site. Asp145 is a Ca(2+) binding site. Catalysis depends on residues Glu148 and Arg188.

This sequence belongs to the LCL3 family.

The protein resides in the mitochondrion. It is found in the membrane. The protein is Probable endonuclease lcl3 (lcl3) of Emericella nidulans (strain FGSC A4 / ATCC 38163 / CBS 112.46 / NRRL 194 / M139) (Aspergillus nidulans).